Reading from the N-terminus, the 123-residue chain is Fluoride-specific ion channel FluC (123 aa).

A run of 4 helical transmembrane segments spans residues 5-25 (LIIGIGGFIGAILRYVISGII), 29-49 (FGIPTGTFIVNLIGSFIVGFV), 65-85 (LIITGFCGALTTFSTFSYETF), and 94-114 (IKFLTNIFINVMGCLIMIYVG). Na(+) contacts are provided by glycine 72 and threonine 75.

This sequence belongs to the fluoride channel Fluc/FEX (TC 1.A.43) family.

It localises to the cell membrane. The enzyme catalyses fluoride(in) = fluoride(out). Its activity is regulated as follows. Na(+) is not transported, but it plays an essential structural role and its presence is essential for fluoride channel function. Functionally, fluoride-specific ion channel. Important for reducing fluoride concentration in the cell, thus reducing its toxicity. The chain is Fluoride-specific ion channel FluC from Methanococcus aeolicus (strain ATCC BAA-1280 / DSM 17508 / OCM 812 / Nankai-3).